Here is a 205-residue protein sequence, read N- to C-terminus: Putative 3-methyladenine DNA glycosylase (205 aa).

This sequence belongs to the DNA glycosylase MPG family.

The chain is Putative 3-methyladenine DNA glycosylase from Bacillus cereus (strain AH187).